A 139-amino-acid chain; its full sequence is Hydrogenase maturation factor HypA (139 aa).

Histidine 2 serves as a coordination point for Ni(2+). Cysteine 73, cysteine 76, cysteine 110, and cysteine 113 together coordinate Zn(2+).

This sequence belongs to the HypA/HybF family.

Involved in the maturation of [NiFe] hydrogenases. Required for nickel insertion into the metal center of the hydrogenase. The sequence is that of Hydrogenase maturation factor HypA from Pyrococcus abyssi (strain GE5 / Orsay).